Here is a 431-residue protein sequence, read N- to C-terminus: Glutamate-1-semialdehyde 2,1-aminomutase (431 aa).

The residue at position 269 (K269) is an N6-(pyridoxal phosphate)lysine.

The protein belongs to the class-III pyridoxal-phosphate-dependent aminotransferase family. HemL subfamily. Homodimer. Pyridoxal 5'-phosphate is required as a cofactor.

The protein localises to the cytoplasm. It carries out the reaction (S)-4-amino-5-oxopentanoate = 5-aminolevulinate. Its pathway is porphyrin-containing compound metabolism; protoporphyrin-IX biosynthesis; 5-aminolevulinate from L-glutamyl-tRNA(Glu): step 2/2. It participates in porphyrin-containing compound metabolism; chlorophyll biosynthesis. This is Glutamate-1-semialdehyde 2,1-aminomutase from Chlorobium phaeobacteroides (strain DSM 266 / SMG 266 / 2430).